The chain runs to 131 residues: Ribosome-binding factor A (131 aa).

This sequence belongs to the RbfA family. In terms of assembly, monomer. Binds 30S ribosomal subunits, but not 50S ribosomal subunits or 70S ribosomes.

It is found in the cytoplasm. Functionally, one of several proteins that assist in the late maturation steps of the functional core of the 30S ribosomal subunit. Associates with free 30S ribosomal subunits (but not with 30S subunits that are part of 70S ribosomes or polysomes). Required for efficient processing of 16S rRNA. May interact with the 5'-terminal helix region of 16S rRNA. The chain is Ribosome-binding factor A from Ruegeria pomeroyi (strain ATCC 700808 / DSM 15171 / DSS-3) (Silicibacter pomeroyi).